The chain runs to 465 residues: Argininosuccinate lyase (465 aa).

It belongs to the lyase 1 family. Argininosuccinate lyase subfamily.

It is found in the cytoplasm. It catalyses the reaction 2-(N(omega)-L-arginino)succinate = fumarate + L-arginine. The protein operates within amino-acid biosynthesis; L-arginine biosynthesis; L-arginine from L-ornithine and carbamoyl phosphate: step 3/3. In Deinococcus geothermalis (strain DSM 11300 / CIP 105573 / AG-3a), this protein is Argininosuccinate lyase.